Reading from the N-terminus, the 164-residue chain is Arginine repressor (164 aa).

This sequence belongs to the ArgR family.

It localises to the cytoplasm. It participates in amino-acid biosynthesis; L-arginine biosynthesis [regulation]. In terms of biological role, regulates arginine biosynthesis genes. The polypeptide is Arginine repressor (Thermus thermophilus (strain ATCC BAA-163 / DSM 7039 / HB27)).